Reading from the N-terminus, the 349-residue chain is Transmembrane protein 59-like (349 aa).

A signal peptide spans 1-22 (MDSVALMPLLLLLLLQPPPATP). Asparagine 100 carries N-linked (GlcNAc...) asparagine glycosylation. The chain crosses the membrane as a helical span at residues 276–296 (ILACCLFLSVLVMLWLSCSTL). The short motif at 347-349 (TKL) is the Microbody targeting signal element.

It belongs to the TMEM59 family.

It localises to the golgi apparatus membrane. Its function is as follows. Modulates the O-glycosylation and complex N-glycosylation steps occurring during the Golgi maturation of APP. Inhibits APP transport to the cell surface and further shedding. The chain is Transmembrane protein 59-like (TMEM59L) from Bos taurus (Bovine).